The sequence spans 506 residues: Subtilisin-like serine protease Cur l 4.0101 (506 aa).

Positions 1–15 (MKYSLIAALPALAAA) are cleaved as a signal peptide. Positions 16–135 (SPTFSTETIH…IERDSEVRIL (120 aa)) are cleaved as a propeptide — removed in mature form. The region spanning 43-134 (SYMVVFKKHV…YIERDSEVRI (92 aa)) is the Inhibitor I9 domain. The tract at residues 59–79 (HDWVQSVHSKNTQERMELRKR) is disordered. A compositionally biased stretch (basic and acidic residues) spans 69–79 (NTQERMELRKR). The Peptidase S8 domain maps to 147–453 (PWGLARISHR…GGSSNYTDII (307 aa)). Residues Asp-183 and His-215 each act as charge relay system in the active site. N-linked (GlcNAc...) asparagine glycosylation is found at Asn-245 and Asn-285. Ser-381 (charge relay system) is an active-site residue. A glycan (N-linked (GlcNAc...) asparagine) is linked at Asn-448. Positions 459-506 (TVKKAASKEEEKESEFRITIPSLSELEDDFEKAKESAGRKAHHVGGKL) are cleaved as a propeptide — removed in mature form.

This sequence belongs to the peptidase S8 family.

Functionally, serine protease. The protein is Subtilisin-like serine protease Cur l 4.0101 of Cochliobolus lunatus (Filamentous fungus).